We begin with the raw amino-acid sequence, 181 residues long: Macro domain-containing protein in sno 5'region (181 aa).

One can recognise a Macro domain in the interval 1–172; sequence MTTITLVQGD…TFARELGDAG (172 aa).

The protein belongs to the MacroD-type family.

The protein is Macro domain-containing protein in sno 5'region of Streptomyces nogalater.